A 246-amino-acid chain; its full sequence is Type III pantothenate kinase (246 aa).

11–18 (DIGNSFIK) serves as a coordination point for ATP. Substrate is bound by residues Y95 and 102-105 (GVDR). The Proton acceptor role is filled by D104. D125 contacts K(+). T128 provides a ligand contact to ATP. T179 contributes to the substrate binding site.

The protein belongs to the type III pantothenate kinase family. As to quaternary structure, homodimer. The cofactor is NH4(+). Requires K(+) as cofactor.

It localises to the cytoplasm. The enzyme catalyses (R)-pantothenate + ATP = (R)-4'-phosphopantothenate + ADP + H(+). It participates in cofactor biosynthesis; coenzyme A biosynthesis; CoA from (R)-pantothenate: step 1/5. Its function is as follows. Catalyzes the phosphorylation of pantothenate (Pan), the first step in CoA biosynthesis. In Pseudoalteromonas atlantica (strain T6c / ATCC BAA-1087), this protein is Type III pantothenate kinase.